Here is a 156-residue protein sequence, read N- to C-terminus: MAPKAKKEAPAPPKAEAKAKALKAKKAVLKGVHSHKKKKIRTSPTFRRPKTLRLRRQPKYPRKSAPRRNKLDHYAIIKFPLTTESAMKKIEDNNTLVFIVDVKANKHQIKQAVKKLYDIDVAKVNTLIRPDGEKKAYVRLAPDYDALDVANKIGII.

Positions 1–19 (MAPKAKKEAPAPPKAEAKA) are enriched in basic and acidic residues. The segment at 1 to 67 (MAPKAKKEAP…PKYPRKSAPR (67 aa)) is disordered. Residue Ala-2 is modified to N,N,N-trimethylalanine. Lys-14 participates in a covalent cross-link: Glycyl lysine isopeptide (Lys-Gly) (interchain with G-Cter in SUMO2). Residues 20-67 (KALKAKKAVLKGVHSHKKKKIRTSPTFRRPKTLRLRRQPKYPRKSAPR) show a composition bias toward basic residues. The beta-like import receptor binding (BIB) domain stretch occupies residues 32–74 (VHSHKKKKIRTSPTFRRPKTLRLRRQPKYPRKSAPRRNKLDHY). Residue Arg-41 is modified to Citrulline. Ser-43 carries the post-translational modification Phosphoserine. Thr-45 is subject to Phosphothreonine. The residue at position 70 (Lys-70) is an N6-acetyllysine.

This sequence belongs to the universal ribosomal protein uL23 family. As to quaternary structure, component of the large ribosomal subunit. Interacts with LYAR and GNL2. Interacts with MDM2; this interaction may promote MDM2-mediated p53/TP53 polyubiquitination. Directly interacts (via BIB domain) with IPO5, IPO7, KPNB1 and TNPO1; these interactions are involved in RPL23A nuclear import for the assembly of ribosomal subunits. Interacts with IPO8. In terms of processing, N-terminus is methylated by METTL11A/NTM1. Citrullinated by PADI4.

Its subcellular location is the cytoplasm. It is found in the nucleus. Component of the large ribosomal subunit. The ribosome is a large ribonucleoprotein complex responsible for the synthesis of proteins in the cell. Binds a specific region on the 26S rRNA. May promote p53/TP53 degradation possibly through the stimulation of MDM2-mediated TP53 polyubiquitination. The protein is Large ribosomal subunit protein uL23 (RPL23A) of Bos taurus (Bovine).